The sequence spans 1317 residues: Clustered mitochondria protein homolog (1317 aa).

Residues 382 to 626 (DITRSQESYL…RVTPLDVTWQ (245 aa)) form the Clu domain. The segment covering 669 to 689 (KAQEEAANKEQSSEVTESKEQ) has biased composition (basic and acidic residues). Disordered stretches follow at residues 669-700 (KAQEEAANKEQSSEVTESKEQESEEKAEEALD) and 939-966 (ANGVNGASHDEGKKKKKKGGDSKSPSRA). TPR repeat units lie at residues 1040-1073 (AKLYHQLSMLYYQTDEKEAAVELARKAVIVTERT), 1082-1115 (ILAYLNLSLFEHASGNTKAALVYIKHAMDLWKII), and 1124-1157 (ITTMNNAAVMLQHLKQYSDSRKWFEASLAVCESL). 2 disordered regions span residues 1252–1273 (VQPQVGQTAPEASGAKGAANAS) and 1288–1317 (GGDATSSRSKQKKRAAASNPKLRGSKKSSA).

It belongs to the CLU family. In terms of assembly, may associate with the eukaryotic translation initiation factor 3 (eIF-3) complex.

The protein localises to the cytoplasm. Its function is as follows. mRNA-binding protein involved in proper cytoplasmic distribution of mitochondria. The protein is Clustered mitochondria protein homolog of Neosartorya fischeri (strain ATCC 1020 / DSM 3700 / CBS 544.65 / FGSC A1164 / JCM 1740 / NRRL 181 / WB 181) (Aspergillus fischerianus).